The sequence spans 397 residues: Elongation factor Tu (397 aa).

The tr-type G domain occupies 10 to 206; sequence KPHVNIGTIG…AVDASIPEPE (197 aa). The tract at residues 19 to 26 is G1; the sequence is GHIDHGKT. 19–26 is a binding site for GTP; that stretch reads GHIDHGKT. Mg(2+) is bound at residue Thr26. A G2 region spans residues 62–66; the sequence is GITIS. The tract at residues 83 to 86 is G3; sequence DCPG. GTP contacts are provided by residues 83–87 and 138–141; these read DCPGH and NKAD. The segment at 138-141 is G4; the sequence is NKAD. A G5 region spans residues 176–178; that stretch reads SAL.

It belongs to the TRAFAC class translation factor GTPase superfamily. Classic translation factor GTPase family. EF-Tu/EF-1A subfamily. In terms of assembly, monomer.

It localises to the cytoplasm. The catalysed reaction is GTP + H2O = GDP + phosphate + H(+). Functionally, GTP hydrolase that promotes the GTP-dependent binding of aminoacyl-tRNA to the A-site of ribosomes during protein biosynthesis. The sequence is that of Elongation factor Tu from Parafrankia sp. (strain EAN1pec).